Here is a 171-residue protein sequence, read N- to C-terminus: NADH-quinone oxidoreductase subunit I 2 (171 aa).

4Fe-4S ferredoxin-type domains lie at 39 to 71 (IVLT…LSKA) and 81 to 110 (EHFR…LTPD). 8 residues coordinate [4Fe-4S] cluster: Cys-51, Cys-54, Cys-57, Cys-61, Cys-90, Cys-93, Cys-96, and Cys-100.

Belongs to the complex I 23 kDa subunit family. As to quaternary structure, NDH-1 is composed of 14 different subunits. Subunits NuoA, H, J, K, L, M, N constitute the membrane sector of the complex. [4Fe-4S] cluster serves as cofactor.

It localises to the cell inner membrane. It catalyses the reaction a quinone + NADH + 5 H(+)(in) = a quinol + NAD(+) + 4 H(+)(out). In terms of biological role, NDH-1 shuttles electrons from NADH, via FMN and iron-sulfur (Fe-S) centers, to quinones in the respiratory chain. The immediate electron acceptor for the enzyme in this species is believed to be ubiquinone. Couples the redox reaction to proton translocation (for every two electrons transferred, four hydrogen ions are translocated across the cytoplasmic membrane), and thus conserves the redox energy in a proton gradient. The protein is NADH-quinone oxidoreductase subunit I 2 of Rhodopseudomonas palustris (strain BisB18).